A 351-amino-acid chain; its full sequence is Protein Maqu_2141 (351 aa).

It belongs to the proline racemase family.

Its function is as follows. Displays neither proline racemase activity nor trans-4-hydroxy-L-proline (t4LHyp) epimerase activity nor t3LHyp dehydratase activity. The polypeptide is Protein Maqu_2141 (Marinobacter nauticus (strain ATCC 700491 / DSM 11845 / VT8) (Marinobacter aquaeolei)).